A 453-amino-acid chain; its full sequence is CCA-adding enzyme (453 aa).

ATP-binding residues include S53 and K56. CTP-binding residues include S53 and K56. Positions 65, 67, and 119 each coordinate Mg(2+). ATP is bound by residues H142, K161, and Y170. CTP is bound by residues H142, K161, and Y170.

The protein belongs to the tRNA nucleotidyltransferase/poly(A) polymerase family. Archaeal CCA-adding enzyme subfamily. Homodimer. Requires Mg(2+) as cofactor.

The enzyme catalyses a tRNA precursor + 2 CTP + ATP = a tRNA with a 3' CCA end + 3 diphosphate. It carries out the reaction a tRNA with a 3' CCA end + 2 CTP + ATP = a tRNA with a 3' CCACCA end + 3 diphosphate. Catalyzes the addition and repair of the essential 3'-terminal CCA sequence in tRNAs without using a nucleic acid template. Adds these three nucleotides in the order of C, C, and A to the tRNA nucleotide-73, using CTP and ATP as substrates and producing inorganic pyrophosphate. tRNA 3'-terminal CCA addition is required both for tRNA processing and repair. Also involved in tRNA surveillance by mediating tandem CCA addition to generate a CCACCA at the 3' terminus of unstable tRNAs. While stable tRNAs receive only 3'-terminal CCA, unstable tRNAs are marked with CCACCA and rapidly degraded. The chain is CCA-adding enzyme from Pyrococcus furiosus (strain ATCC 43587 / DSM 3638 / JCM 8422 / Vc1).